The sequence spans 546 residues: Plastidic glucose transporter 4 (546 aa).

Helical transmembrane passes span 105-125 (VLPF…HLGV), 148-168 (WIVS…GALA), 182-202 (IPLA…TMIV), 205-225 (LLAG…ISEI), 240-260 (LFIC…AANP), 265-285 (TMFG…AFSP), 345-365 (VVSV…NAVV), 381-401 (VAAS…ASSL), 410-430 (LLLT…LSFT), 441-461 (LAVV…GPVP), 477-497 (AVAL…LYFL), and 503-523 (FGIS…VLYI).

This sequence belongs to the major facilitator superfamily. Sugar transporter (TC 2.A.1.1) family.

It localises to the plastid. The protein localises to the chloroplast inner membrane. In terms of biological role, may be involved in the efflux of glucose towards the cytosol. The protein is Plastidic glucose transporter 4 of Arabidopsis thaliana (Mouse-ear cress).